The primary structure comprises 319 residues: Acetyl esterase (319 aa).

The Involved in the stabilization of the negatively charged intermediate by the formation of the oxyanion hole signature appears at 91–93 (HGG). Residues Ser165, Asp262, and His292 contribute to the active site.

The protein belongs to the 'GDXG' lipolytic enzyme family. As to quaternary structure, homodimer. Interacts with MalT and MelA.

The protein resides in the cytoplasm. Its function is as follows. Displays esterase activity towards short chain fatty esters (acyl chain length of up to 8 carbons). Able to hydrolyze triacetylglycerol (triacetin) and tributyrylglycerol (tributyrin), but not trioleylglycerol (triolein) or cholesterol oleate. Negatively regulates MalT activity by antagonizing maltotriose binding. Inhibits MelA galactosidase activity. This Escherichia coli O9:H4 (strain HS) protein is Acetyl esterase.